A 245-amino-acid chain; its full sequence is Orotidine 5'-phosphate decarboxylase (245 aa).

Substrate-binding positions include D22, K44, 71–80 (DLKFHDIPNT), T131, R192, Q201, G221, and R222. The Proton donor role is filled by K73.

It belongs to the OMP decarboxylase family. Type 1 subfamily. As to quaternary structure, homodimer.

It catalyses the reaction orotidine 5'-phosphate + H(+) = UMP + CO2. Its pathway is pyrimidine metabolism; UMP biosynthesis via de novo pathway; UMP from orotate: step 2/2. Functionally, catalyzes the decarboxylation of orotidine 5'-monophosphate (OMP) to uridine 5'-monophosphate (UMP). This is Orotidine 5'-phosphate decarboxylase from Salmonella newport (strain SL254).